Consider the following 215-residue polypeptide: ATP phosphoribosyltransferase (215 aa).

Belongs to the ATP phosphoribosyltransferase family. Short subfamily. As to quaternary structure, heteromultimer composed of HisG and HisZ subunits.

It localises to the cytoplasm. It catalyses the reaction 1-(5-phospho-beta-D-ribosyl)-ATP + diphosphate = 5-phospho-alpha-D-ribose 1-diphosphate + ATP. It participates in amino-acid biosynthesis; L-histidine biosynthesis; L-histidine from 5-phospho-alpha-D-ribose 1-diphosphate: step 1/9. Catalyzes the condensation of ATP and 5-phosphoribose 1-diphosphate to form N'-(5'-phosphoribosyl)-ATP (PR-ATP). Has a crucial role in the pathway because the rate of histidine biosynthesis seems to be controlled primarily by regulation of HisG enzymatic activity. The protein is ATP phosphoribosyltransferase of Cyanothece sp. (strain PCC 7425 / ATCC 29141).